The following is a 425-amino-acid chain: MAAKWEKLEGNVGVLTIEVDAKEVNNSIDAAFKKVVKTINVPGFRKGKMPRPLFEQRFGVESLYQDALDIILPKAYGEAIDEAGIFPVAHPEIDIEKFEKNANLIFTAKVTVKPEVKLGEYKGLAVEKVETTVTDEDVENELKSLQERQAELVVKEEGTVENGDTAVIDFEGFVDGEAFEGGKGENYSLAIGSGTFIPGFEEQVIGLKSGESKDVEVSFPEEYHAAELAGKPATFKVTVHEIKTKELPELNDEFAKEADEAVATLDELKAKLRTNLEEGKKHEAEHKVRDEVVELAAANAEIDIPEAMIDTELDRMVREFEQRLSQQGMNLELYYQFTGTDADKLKEQMKEDAQKRVRINLVLEAIIEAENIEVTEEEVTAEVEKMAEMYGMPVDAIKQALGSVDALAEDLKVRKAVDFLVENAA.

In terms of domain architecture, PPIase FKBP-type spans 163-248; it reads GDTAVIDFEG…VHEIKTKELP (86 aa).

It belongs to the FKBP-type PPIase family. Tig subfamily.

The protein resides in the cytoplasm. It carries out the reaction [protein]-peptidylproline (omega=180) = [protein]-peptidylproline (omega=0). Functionally, involved in protein export. Acts as a chaperone by maintaining the newly synthesized protein in an open conformation. Functions as a peptidyl-prolyl cis-trans isomerase. This chain is Trigger factor, found in Bacillus cereus (strain ATCC 10987 / NRS 248).